Here is a 470-residue protein sequence, read N- to C-terminus: BTB/POZ domain-containing protein 17 (470 aa).

The signal sequence occupies residues 1–18 (MRMKGLYVVPLLLALVES). The BTB domain maps to 53–122 (SDTTLRIRTA…FYCGEISVNL (70 aa)). One can recognise a BACK domain in the interval 161-261 (VVSWYHYALR…ITPSQLFQIQ (101 aa)).

The protein localises to the secreted. The polypeptide is BTB/POZ domain-containing protein 17 (btbd17) (Xenopus laevis (African clawed frog)).